Consider the following 116-residue polypeptide: Large ribosomal subunit protein bL17 (116 aa).

The protein belongs to the bacterial ribosomal protein bL17 family. In terms of assembly, part of the 50S ribosomal subunit. Contacts protein L32.

This chain is Large ribosomal subunit protein bL17, found in Fusobacterium nucleatum subsp. nucleatum (strain ATCC 25586 / DSM 15643 / BCRC 10681 / CIP 101130 / JCM 8532 / KCTC 2640 / LMG 13131 / VPI 4355).